Reading from the N-terminus, the 108-residue chain is UPF0102 protein SO_0299 (108 aa).

The protein belongs to the UPF0102 family.

The sequence is that of UPF0102 protein SO_0299 from Shewanella oneidensis (strain ATCC 700550 / JCM 31522 / CIP 106686 / LMG 19005 / NCIMB 14063 / MR-1).